Reading from the N-terminus, the 21-residue chain is uncharacterized protein (21 aa).

This is an uncharacterized protein from Haemophilus influenzae (strain ATCC 51907 / DSM 11121 / KW20 / Rd).